The primary structure comprises 257 residues: Pimeloyl-[acyl-carrier protein] methyl ester esterase (257 aa).

The 227-residue stretch at 16 to 242 (LVLLHGWGLN…AAHAPFISHP (227 aa)) folds into the AB hydrolase-1 domain. Residues Trp-22, 82-83 (SL), and 143-147 (FLGLQ) each bind substrate. Catalysis depends on Ser-82, which acts as the Nucleophile. Residues Asp-207 and His-235 contribute to the active site. His-235 contributes to the substrate binding site.

The protein belongs to the AB hydrolase superfamily. Carboxylesterase BioH family. In terms of assembly, monomer.

The protein localises to the cytoplasm. It catalyses the reaction 6-carboxyhexanoyl-[ACP] methyl ester + H2O = 6-carboxyhexanoyl-[ACP] + methanol + H(+). It functions in the pathway cofactor biosynthesis; biotin biosynthesis. Its function is as follows. The physiological role of BioH is to remove the methyl group introduced by BioC when the pimeloyl moiety is complete. It allows to synthesize pimeloyl-ACP via the fatty acid synthetic pathway through the hydrolysis of the ester bonds of pimeloyl-ACP esters. This chain is Pimeloyl-[acyl-carrier protein] methyl ester esterase, found in Sodalis glossinidius (strain morsitans).